A 251-amino-acid polypeptide reads, in one-letter code: Hydroxyacylglutathione hydrolase GloB (251 aa).

Residues His-53, His-55, Asp-57, His-58, His-110, and Asp-127 each contribute to the Zn(2+) site. Substrate is bound by residues 136–138, 165–167, and 245–248; these read RLF, HEY, and RSKK. His-165 serves as a coordination point for Zn(2+).

The protein belongs to the metallo-beta-lactamase superfamily. Glyoxalase II family. In terms of assembly, monomer. Zn(2+) is required as a cofactor.

The enzyme catalyses an S-(2-hydroxyacyl)glutathione + H2O = a 2-hydroxy carboxylate + glutathione + H(+). It catalyses the reaction (R)-S-lactoylglutathione + H2O = (R)-lactate + glutathione + H(+). The protein operates within secondary metabolite metabolism; methylglyoxal degradation; (R)-lactate from methylglyoxal: step 2/2. Is inhibited by Cu(2+). In terms of biological role, type II glyoxalase that catalyzes the hydrolysis of (R)-S-lactoylglutathione to (R)-lactate and glutathione. Is more efficient than the isozyme GloC, and plays a major contribution to methylglyoxal (MG) detoxification in E.coli. The two isoenzymes have additive effects and ensure maximal MG degradation. In Escherichia coli (strain K12), this protein is Hydroxyacylglutathione hydrolase GloB.